A 412-amino-acid chain; its full sequence is Class E basic helix-loop-helix protein 40 (412 aa).

The segment at 1-139 (MERIPSAQPP…LSGRNVETGQ (139 aa)) is essential for interaction with BMAL1, E-box binding and repressor activity against the CLOCK-BMAL1 heterodimer. Positions 52–107 (TYKLPHRLIEKKRRDRINECIAQLKDLLPEHLKLTTLGHLEKAVVLELTLKHVKAL) constitute a bHLH domain. Residues 75-79 (LKDLL) are necessary for interaction with RXRA and repressor activity against RXRA. Positions 142-175 (FCSGFQTCAREVLQYLAKHENTRDLKSSQLVTHL) constitute an Orange domain. Lys-159 participates in a covalent cross-link: Glycyl lysine isopeptide (Lys-Gly) (interchain with G-Cter in SUMO1, SUMO2 and SUMO3). Lys-167 participates in a covalent cross-link: Glycyl lysine isopeptide (Lys-Gly) (interchain with G-Cter in SUMO2). Disordered regions lie at residues 183–259 (LQGG…SEQL) and 275–309 (IGAI…LISS). Ser-235 carries the phosphoserine modification. Residues 248-259 (ESEKGDLRSEQL) show a composition bias toward basic and acidic residues. Lys-279 participates in a covalent cross-link: Glycyl lysine isopeptide (Lys-Gly) (interchain with G-Cter in SUMO1); alternate. Residue Lys-279 forms a Glycyl lysine isopeptide (Lys-Gly) (interchain with G-Cter in SUMO1, SUMO2 and SUMO3); alternate linkage. Residue Lys-279 forms a Glycyl lysine isopeptide (Lys-Gly) (interchain with G-Cter in SUMO2); alternate linkage. A Glycyl lysine isopeptide (Lys-Gly) (interchain with G-Cter in SUMO2) cross-link involves residue Lys-288. Residue Ser-383 is modified to Phosphoserine.

Homodimer. Heterodimer with BHLHE41/DEC2. Interacts with TCF3/E47. Interacts with ubiquitin-conjugating enzyme UBE2I/UBC9. Interacts with HDAC1, SUMO1, RXRA and BMAL1. Ubiquitinated; which may lead to proteasomal degradation. In terms of processing, sumoylation inhibits its ubiquitination and promotes its negative regulation of the CLOCK-BMAL1 heterodimer transcriptional activator activity.

The protein localises to the cytoplasm. Its subcellular location is the nucleus. Its function is as follows. Transcriptional repressor involved in the regulation of the circadian rhythm by negatively regulating the activity of the clock genes and clock-controlled genes. Acts as the negative limb of a novel autoregulatory feedback loop (DEC loop) which differs from the one formed by the PER and CRY transcriptional repressors (PER/CRY loop). Both these loops are interlocked as it represses the expression of PER1/2 and in turn is repressed by PER1/2 and CRY1/2. Represses the activity of the circadian transcriptional activator: CLOCK-BMAL1|BMAL2 heterodimer by competing for the binding to E-box elements (5'-CACGTG-3') found within the promoters of its target genes. Negatively regulates its own expression and the expression of DBP and BHLHE41/DEC2. Acts as a corepressor of RXR and the RXR-LXR heterodimers and represses the ligand-induced RXRA and NR1H3/LXRA transactivation activity. May be involved in the regulation of chondrocyte differentiation via the cAMP pathway. Represses the transcription of NR0B2 and attentuates the transactivation of NR0B2 by the CLOCK-BMAL1 complex. Drives the circadian rhythm of blood pressure through transcriptional repression of ATP1B1 in the cardiovascular system. In Pongo abelii (Sumatran orangutan), this protein is Class E basic helix-loop-helix protein 40 (BHLHE40).